Consider the following 391-residue polypeptide: Processive diacylglycerol beta-glucosyltransferase (391 aa).

Belongs to the glycosyltransferase 28 family. UgtP subfamily.

Its subcellular location is the cell membrane. It catalyses the reaction a 1,2-diacyl-3-O-(beta-D-glucopyranosyl)-sn-glycerol + UDP-alpha-D-glucose = a 1,2-diacyl-3-O-(beta-D-Glc-(1-&gt;6)-beta-D-Glc)-sn-glycerol + UDP + H(+). The catalysed reaction is a 1,2-diacyl-sn-glycerol + UDP-alpha-D-glucose = a 1,2-diacyl-3-O-(beta-D-glucopyranosyl)-sn-glycerol + UDP + H(+). The protein operates within glycolipid metabolism; diglucosyl-diacylglycerol biosynthesis. In terms of biological role, processive glucosyltransferase involved in the biosynthesis of both the bilayer- and non-bilayer-forming membrane glucolipids. Is able to successively transfer two glucosyl residues to diacylglycerol (DAG), thereby catalyzing the formation of beta-monoglucosyl-DAG (3-O-(beta-D-glucopyranosyl)-1,2-diacyl-sn-glycerol) and beta-diglucosyl-DAG (3-O-(beta-D-glucopyranosyl-beta-(1-&gt;6)-D-glucopyranosyl)-1,2-diacyl-sn-glycerol). Beta-diglucosyl-DAG is the predominant glycolipid found in Bacillales and is also used as a membrane anchor for lipoteichoic acid (LTA). The protein is Processive diacylglycerol beta-glucosyltransferase of Staphylococcus aureus (strain MRSA252).